The sequence spans 207 residues: 8-oxoguanine DNA glycosylase/AP lyase (207 aa).

Active-site residues include Lys129 and Asp147.

It belongs to the type-2 OGG1 family.

The enzyme catalyses 2'-deoxyribonucleotide-(2'-deoxyribose 5'-phosphate)-2'-deoxyribonucleotide-DNA = a 3'-end 2'-deoxyribonucleotide-(2,3-dehydro-2,3-deoxyribose 5'-phosphate)-DNA + a 5'-end 5'-phospho-2'-deoxyribonucleoside-DNA + H(+). In terms of biological role, catalyzes the excision of an oxidatively damaged form of guanine (7,8-dihydro-8-oxoguanine = 8-oxoG) from DNA. Also cleaves the DNA backbone at apurinic/apyrimidinic sites (AP sites). The chain is 8-oxoguanine DNA glycosylase/AP lyase from Thermotoga maritima (strain ATCC 43589 / DSM 3109 / JCM 10099 / NBRC 100826 / MSB8).